The following is a 363-amino-acid chain: Flagellar P-ring protein (363 aa).

The N-terminal stretch at 1–20 is a signal peptide; that stretch reads MKKFTLLLLCFVLPMTSAYA.

It belongs to the FlgI family. As to quaternary structure, the basal body constitutes a major portion of the flagellar organelle and consists of four rings (L,P,S, and M) mounted on a central rod.

It is found in the periplasm. It localises to the bacterial flagellum basal body. In terms of biological role, assembles around the rod to form the L-ring and probably protects the motor/basal body from shearing forces during rotation. This Vibrio vulnificus (strain YJ016) protein is Flagellar P-ring protein.